Reading from the N-terminus, the 166-residue chain is PR-toxin biosynthesis cluster protein 10 (166 aa).

In terms of biological role, part of the gene cluster that mediates the biosynthesis of PR-toxin, a bicyclic sesquiterpene belonging to the eremophilane class and acting as a mycotoxin. The first step of the pathway is catalyzed by the aristolochene synthase which performs the cyclization of trans,trans-farnesyl diphosphate (FPP) to the bicyclic sesquiterpene aristolochene. Following the formation of aristolochene, the non-oxygenated aristolochene is converted to the trioxygenated intermediate eremofortin B, via 7-epi-neopetasone. This conversion appears to involve three enzymes, a hydroxysterol oxidase-like enzyme, the quinone-oxidase prx3 that forms the quinone-type-structure in the bicyclic nucleus of aristolochene with the C8-oxo group and the C-3 hydroxyl group, and the P450 monooxygenase prx9 that introduces the epoxide at the double bond between carbons 1 and 2. No monoxy or dioxy-intermediates have been reported to be released to the broth, so these three early oxidative reactions may be coupled together. Eremofortin B is further oxidized by another P450 monooxygenase, that introduces a second epoxide between carbons 7 and 11 prior to acetylation to eremofortin A by the acetyltransferase prx11. The second epoxidation may be performed by a second P450 monooxygenase. After the acetylation step, eremofortin A is converted to eremofortin C and then to PR-toxin. First the conversion of eremofortin A to eremofortin C proceeds by oxidation of the side chain of the molecule at C-12 and is catalyzed by the short-chain oxidoreductase prx1. The cytochrome P450 monooxygenase prx8 also plays a role in this step. The primary alcohol formed at C-12 is finally oxidized by the short-chain alcohol dehydrogenase prx4 that forms PR-toxin. The chain is PR-toxin biosynthesis cluster protein 10 from Penicillium rubens (strain ATCC 28089 / DSM 1075 / NRRL 1951 / Wisconsin 54-1255) (Penicillium chrysogenum).